The following is a 432-amino-acid chain: Adenylosuccinate synthetase (432 aa).

Residues 13-19 (GDEGKGK) and 41-43 (GHT) contribute to the GTP site. Catalysis depends on D14, which acts as the Proton acceptor. Mg(2+) contacts are provided by D14 and G41. IMP is bound by residues 14–17 (DEGK), 39–42 (NAGH), T130, R144, Q225, T240, and R304. H42 serves as the catalytic Proton donor. Residue 300-306 (ATTGRRR) coordinates substrate. GTP-binding positions include R306, 332–334 (KLD), and 415–417 (STG).

It belongs to the adenylosuccinate synthetase family. Homodimer. Mg(2+) serves as cofactor.

It localises to the cytoplasm. It carries out the reaction IMP + L-aspartate + GTP = N(6)-(1,2-dicarboxyethyl)-AMP + GDP + phosphate + 2 H(+). The protein operates within purine metabolism; AMP biosynthesis via de novo pathway; AMP from IMP: step 1/2. Its function is as follows. Plays an important role in the de novo pathway of purine nucleotide biosynthesis. Catalyzes the first committed step in the biosynthesis of AMP from IMP. The sequence is that of Adenylosuccinate synthetase from Klebsiella pneumoniae (strain 342).